The primary structure comprises 150 residues: Large ribosomal subunit protein uL11 (150 aa).

The interval 83-111 (AAGLKPQGKRNRAKGSEKPGRQTAGTVTA) is disordered.

The protein belongs to the universal ribosomal protein uL11 family. As to quaternary structure, part of the ribosomal stalk of the 50S ribosomal subunit. Interacts with L10 and the large rRNA to form the base of the stalk. L10 forms an elongated spine to which L12 dimers bind in a sequential fashion forming a multimeric L10(L12)X complex. One or more lysine residues are methylated.

In terms of biological role, forms part of the ribosomal stalk which helps the ribosome interact with GTP-bound translation factors. This is Large ribosomal subunit protein uL11 from Paracoccus denitrificans (strain Pd 1222).